The sequence spans 309 residues: HPr kinase/phosphorylase (309 aa).

Catalysis depends on residues His-138 and Lys-159. Gly-153–Ser-160 contacts ATP. Ser-160 contributes to the Mg(2+) binding site. Catalysis depends on Asp-177, which acts as the Proton acceptor; for phosphorylation activity. Proton donor; for dephosphorylation activity. An important for the catalytic mechanism of both phosphorylation and dephosphorylation region spans residues Leu-201 to Asn-210. Glu-202 contacts Mg(2+). The active site involves Arg-243. Positions Pro-264–Arg-269 are important for the catalytic mechanism of dephosphorylation.

Belongs to the HPrK/P family. As to quaternary structure, homohexamer. Mg(2+) is required as a cofactor.

It catalyses the reaction [HPr protein]-L-serine + ATP = [HPr protein]-O-phospho-L-serine + ADP + H(+). The catalysed reaction is [HPr protein]-O-phospho-L-serine + phosphate + H(+) = [HPr protein]-L-serine + diphosphate. Functionally, catalyzes the ATP- as well as the pyrophosphate-dependent phosphorylation of a specific serine residue in HPr, a phosphocarrier protein of the phosphoenolpyruvate-dependent sugar phosphotransferase system (PTS). HprK/P also catalyzes the pyrophosphate-producing, inorganic phosphate-dependent dephosphorylation (phosphorolysis) of seryl-phosphorylated HPr (P-Ser-HPr). The two antagonistic activities of HprK/P are regulated by several intracellular metabolites, which change their concentration in response to the absence or presence of rapidly metabolisable carbon sources (glucose, fructose, etc.) in the growth medium. Also phosphorylates/dephosphorylates the HPr-like catabolite repression protein crh on a specific serine residue. Therefore, by controlling the phosphorylation state of HPr and crh, HPrK/P is a sensor enzyme that plays a major role in the regulation of carbon metabolism and sugar transport: it mediates carbon catabolite repression (CCR), and regulates PTS-catalyzed carbohydrate uptake and inducer exclusion. This Bacillus cereus (strain G9842) protein is HPr kinase/phosphorylase.